Reading from the N-terminus, the 165-residue chain is uncharacterized protein (165 aa).

5 helical membrane-spanning segments follow: residues 30-50, 65-85, 86-106, 108-128, and 131-151; these read GWEL…AAGG, GMVW…VSGL, SAFW…VWQG, FWLL…FASG, and WTVT…SEYG.

To E.coli YcdZ.

The protein resides in the cell membrane. This is an uncharacterized protein from Escherichia coli (strain K12).